The chain runs to 429 residues: 3-phosphoshikimate 1-carboxyvinyltransferase (429 aa).

K22, S23, and R27 together coordinate 3-phosphoshikimate. Position 22 (K22) interacts with phosphoenolpyruvate. Phosphoenolpyruvate is bound by residues G93 and R122. Residues S168, S169, Q170, S196, D311, and K338 each contribute to the 3-phosphoshikimate site. Residue Q170 coordinates phosphoenolpyruvate. The Proton acceptor role is filled by D311. Positions 342 and 384 each coordinate phosphoenolpyruvate.

Belongs to the EPSP synthase family. As to quaternary structure, monomer.

It localises to the cytoplasm. It carries out the reaction 3-phosphoshikimate + phosphoenolpyruvate = 5-O-(1-carboxyvinyl)-3-phosphoshikimate + phosphate. It participates in metabolic intermediate biosynthesis; chorismate biosynthesis. Functionally, catalyzes the transfer of the enolpyruvyl moiety of phosphoenolpyruvate (PEP) to the 5-hydroxyl of shikimate-3-phosphate (S3P) to produce enolpyruvyl shikimate-3-phosphate and inorganic phosphate. The chain is 3-phosphoshikimate 1-carboxyvinyltransferase from Methanocaldococcus jannaschii (strain ATCC 43067 / DSM 2661 / JAL-1 / JCM 10045 / NBRC 100440) (Methanococcus jannaschii).